The primary structure comprises 466 residues: Transcription factor SOX-10 (466 aa).

Residues 1–67 (MAEEQDLSEV…QQDGEADDDK (67 aa)) form a disordered region. Over residues 23 to 32 (LSPGSAPSLG) the composition is skewed to low complexity. Phosphoserine is present on S24. The tract at residues 62-102 (EADDDKFPVCIREAVSQVLSGYDWTLVPMPVRVNGASKSKP) is dimerization (DIM). Residues 104–172 (VKRPMNAFMV…QHKKDHPDYK (69 aa)) constitute a DNA-binding region (HMG box). A Nuclear export signal motif is present at residues 134-145 (LSKTLGKLWRLL). Composition is skewed to basic and acidic residues over residues 160–173 (LRMQ…DYKY) and 254–271 (ADPK…KPHI). Disordered regions lie at residues 160-199 (LRMQ…EQGG), 212-274 (LDHR…IDFG), 354-375 (AQVK…QPST), and 433-466 (RPLY…LSRP). Residues 228 to 310 (PEHPSGQSHG…LPPNGHPGHV (83 aa)) form a transactivation domain (TAM) region. A transactivation domain (TAC) region spans residues 353–466 (KAQVKTETAG…QPVYTTLSRP (114 aa)). Polar residues predominate over residues 440-466 (SDPSPSGPQSHSPTHWEQPVYTTLSRP).

As to quaternary structure, monomer. Interacts with ARMCX3 at the mitochondrial outer membrane surface. Interacts with PAX3. Expressed in fetal brain and in adult brain, heart, small intestine and colon.

Its subcellular location is the cytoplasm. The protein resides in the nucleus. It localises to the mitochondrion outer membrane. Its function is as follows. Transcription factor that plays a central role in developing and mature glia. Specifically activates expression of myelin genes, during oligodendrocyte (OL) maturation, such as DUSP15 and MYRF, thereby playing a central role in oligodendrocyte maturation and CNS myelination. Once induced, MYRF cooperates with SOX10 to implement the myelination program. Transcriptional activator of MITF, acting synergistically with PAX3. Transcriptional activator of MBP, via binding to the gene promoter. In Homo sapiens (Human), this protein is Transcription factor SOX-10 (SOX10).